The following is a 104-amino-acid chain: Phosphoribosyl-ATP pyrophosphatase (104 aa).

It belongs to the PRA-PH family.

It is found in the cytoplasm. It carries out the reaction 1-(5-phospho-beta-D-ribosyl)-ATP + H2O = 1-(5-phospho-beta-D-ribosyl)-5'-AMP + diphosphate + H(+). It functions in the pathway amino-acid biosynthesis; L-histidine biosynthesis; L-histidine from 5-phospho-alpha-D-ribose 1-diphosphate: step 2/9. This is Phosphoribosyl-ATP pyrophosphatase from Streptococcus gordonii (strain Challis / ATCC 35105 / BCRC 15272 / CH1 / DL1 / V288).